Consider the following 55-residue polypeptide: ATP synthase protein 8 (55 aa).

A helical membrane pass occupies residues 7-24 (NPWLFIMLMSWLTFSLII). Residues 35-55 (NPPSNKTPTTTKTSPWTWPWT) are disordered. Positions 37 to 55 (PSNKTPTTTKTSPWTWPWT) are enriched in low complexity.

Belongs to the ATPase protein 8 family. As to quaternary structure, F-type ATPases have 2 components, CF(1) - the catalytic core - and CF(0) - the membrane proton channel.

It localises to the mitochondrion membrane. In terms of biological role, mitochondrial membrane ATP synthase (F(1)F(0) ATP synthase or Complex V) produces ATP from ADP in the presence of a proton gradient across the membrane which is generated by electron transport complexes of the respiratory chain. F-type ATPases consist of two structural domains, F(1) - containing the extramembraneous catalytic core and F(0) - containing the membrane proton channel, linked together by a central stalk and a peripheral stalk. During catalysis, ATP synthesis in the catalytic domain of F(1) is coupled via a rotary mechanism of the central stalk subunits to proton translocation. Part of the complex F(0) domain. Minor subunit located with subunit a in the membrane. This Corythaeola cristata (Great blue turaco) protein is ATP synthase protein 8 (MT-ATP8).